Here is a 252-residue protein sequence, read N- to C-terminus: Imidazole glycerol phosphate synthase subunit HisF (252 aa).

Active-site residues include Asp11 and Asp130.

Belongs to the HisA/HisF family. In terms of assembly, heterodimer of HisH and HisF.

The protein localises to the cytoplasm. The catalysed reaction is 5-[(5-phospho-1-deoxy-D-ribulos-1-ylimino)methylamino]-1-(5-phospho-beta-D-ribosyl)imidazole-4-carboxamide + L-glutamine = D-erythro-1-(imidazol-4-yl)glycerol 3-phosphate + 5-amino-1-(5-phospho-beta-D-ribosyl)imidazole-4-carboxamide + L-glutamate + H(+). It functions in the pathway amino-acid biosynthesis; L-histidine biosynthesis; L-histidine from 5-phospho-alpha-D-ribose 1-diphosphate: step 5/9. Its function is as follows. IGPS catalyzes the conversion of PRFAR and glutamine to IGP, AICAR and glutamate. The HisF subunit catalyzes the cyclization activity that produces IGP and AICAR from PRFAR using the ammonia provided by the HisH subunit. The polypeptide is Imidazole glycerol phosphate synthase subunit HisF (Bacillus cereus (strain AH820)).